A 161-amino-acid chain; its full sequence is Small ribosomal subunit protein bS6 (161 aa).

The disordered stretch occupies residues 107 to 161 (KGDERERGFRGPKPAGRFESGRGGAGGARRGYDDREEFRARNEREDGRDTDGEAE). Residues 136 to 161 (RGYDDREEFRARNEREDGRDTDGEAE) show a composition bias toward basic and acidic residues.

This sequence belongs to the bacterial ribosomal protein bS6 family.

Functionally, binds together with bS18 to 16S ribosomal RNA. This is Small ribosomal subunit protein bS6 from Gluconacetobacter diazotrophicus (strain ATCC 49037 / DSM 5601 / CCUG 37298 / CIP 103539 / LMG 7603 / PAl5).